Here is a 355-residue protein sequence, read N- to C-terminus: Protein-glutamate methylesterase/protein-glutamine glutaminase 3 (355 aa).

One can recognise a Response regulatory domain in the interval 8-123 (SVLIVDDSGM…AREVEDFVDK (116 aa)). Asp59 carries the post-translational modification 4-aspartylphosphate. Residues 139-161 (RSAPAAGPTPVPQAPPPPAAPPA) form a disordered region. Positions 145 to 159 (GPTPVPQAPPPPAAP) are enriched in pro residues. Residues 160–350 (PAGDGGIIAI…ASLLEITGAS (191 aa)) form the CheB-type methylesterase domain. Catalysis depends on residues Ser172, His199, and Asp292.

It belongs to the CheB family. Post-translationally, phosphorylated by CheA. Phosphorylation of the N-terminal regulatory domain activates the methylesterase activity.

The protein resides in the cytoplasm. It catalyses the reaction [protein]-L-glutamate 5-O-methyl ester + H2O = L-glutamyl-[protein] + methanol + H(+). It carries out the reaction L-glutaminyl-[protein] + H2O = L-glutamyl-[protein] + NH4(+). Involved in chemotaxis. Part of a chemotaxis signal transduction system that modulates chemotaxis in response to various stimuli. Catalyzes the demethylation of specific methylglutamate residues introduced into the chemoreceptors (methyl-accepting chemotaxis proteins or MCP) by CheR. Also mediates the irreversible deamidation of specific glutamine residues to glutamic acid. This is Protein-glutamate methylesterase/protein-glutamine glutaminase 3 from Paramagnetospirillum magneticum (strain ATCC 700264 / AMB-1) (Magnetospirillum magneticum).